Consider the following 783-residue polypeptide: Cyclin-dependent kinase 11A (783 aa).

Over residues 18 to 58 (QEKKRRKEQEEKAEIKRLKNSDDRDSKRDSLEEGELRDHCM) the composition is skewed to basic and acidic residues. Residues 18-396 (QEKKRRKEQE…SALTEGDYVP (379 aa)) are disordered. A phosphoserine mark is found at S47 and S72. The span at 95 to 125 (EKVHHRKDEKRKEKWKHARVKEREHERRKRH) shows a compositional bias: basic residues. Composition is skewed to basic and acidic residues over residues 126-215 (REEQ…DKVK), 226-241 (PPRE…KPGE), and 252-264 (QLKE…RDLL). The residue at position 271 (S271) is a Phosphoserine. Residues 279–290 (SAESSSAESGSG) are compositionally biased toward low complexity. Acidic residues-rich tracts occupy residues 291–352 (SEEE…EERE) and 371–380 (ESEEAEEEVG). The Protein kinase domain maps to 427–647 (QCLNRIEEGT…VFKELGTPSE (221 aa)). ATP-binding positions include 432 to 440 (IEEGTYGVV) and K455. A Phosphoserine; by CDK7 modification is found at S470. A Phosphothreonine; by CDK7 modification is found at T476. The active-site Proton acceptor is D550. S577 carries the post-translational modification Phosphoserine. The residue at position 582 (Y582) is a Phosphotyrosine. A phosphothreonine mark is found at T583 and T739. Positions 721–783 (SMFPTWPAKS…AAGPGFSLKF (63 aa)) are disordered. S740 bears the Phosphoserine mark.

The protein belongs to the protein kinase superfamily. CMGC Ser/Thr protein kinase family. CDC2/CDKX subfamily. The cleaved p110 isoform, p110C, binds to the serine/threonine kinase PAK1. The p58 isoform but not the p110 isoform or p110C interacts with CCND3. The p110 isoforms are found in large molecular weight complexes containing CCNL1 and SFRS7. It depends on Mg(2+) as a cofactor. Post-translationally, during apoptosis, induced by Fas or tumor necrosis factor, specific CKD11 p110 isoforms are cleaved by caspases to produce a protein (p110C) that contains the C-terminal kinase domain of the CDK11 proteins. Expressed ubiquitously. Some evidence of isoform-specific tissue distribution.

The protein localises to the cytoplasm. It is found in the nucleus. It catalyses the reaction L-seryl-[protein] + ATP = O-phospho-L-seryl-[protein] + ADP + H(+). It carries out the reaction L-threonyl-[protein] + ATP = O-phospho-L-threonyl-[protein] + ADP + H(+). Phosphorylation at Thr-436 or Tyr-437 inactivates the enzyme, while phosphorylation at Thr-583 activates it. Its function is as follows. Appears to play multiple roles in cell cycle progression, cytokinesis and apoptosis. The p110 isoforms have been suggested to be involved in pre-mRNA splicing, potentially by phosphorylating the splicing protein SFRS7. The p58 isoform may act as a negative regulator of normal cell cycle progression. This Homo sapiens (Human) protein is Cyclin-dependent kinase 11A (CDK11A).